A 338-amino-acid polypeptide reads, in one-letter code: MTDRYILAVESSCDETSVAVLKNDNVLLTNIIASQVESHKRFGGVVPEVASRHHVEVITTCFDDALKEAQLEASDLTAVAVTYGPGLVGALLVGLAAAKAFAWANDLPLIPVNHMAGHLMAAREQGELEYPLMALLVSGGHTELVYVTEPGEYHIVGETRDDAVGEAYDKVGRVMGLPYPAGREIDQLAHQGTDTYHFPRAMMKEDHLEFSFSGLQSAFINLHHNAQQKGEELVLEDLCASFQAAVLDILLAKTKKALKQYPSKMLVVAGGVAANQGLRERLAKEITDLAVVIPPLRLCGDNAGMIALAAAVEYDKGHVADLDLNAKPSLAFESFHQQ.

Residues histidine 114 and histidine 118 each coordinate Fe cation. Substrate-binding positions include leucine 136–glycine 140, aspartate 169, glycine 182, aspartate 186, and asparagine 275. Aspartate 301 serves as a coordination point for Fe cation.

Belongs to the KAE1 / TsaD family. Fe(2+) serves as cofactor.

It is found in the cytoplasm. The catalysed reaction is L-threonylcarbamoyladenylate + adenosine(37) in tRNA = N(6)-L-threonylcarbamoyladenosine(37) in tRNA + AMP + H(+). Functionally, required for the formation of a threonylcarbamoyl group on adenosine at position 37 (t(6)A37) in tRNAs that read codons beginning with adenine. Is involved in the transfer of the threonylcarbamoyl moiety of threonylcarbamoyl-AMP (TC-AMP) to the N6 group of A37, together with TsaE and TsaB. TsaD likely plays a direct catalytic role in this reaction. This chain is tRNA N6-adenosine threonylcarbamoyltransferase, found in Streptococcus equi subsp. zooepidemicus (strain MGCS10565).